Here is a 107-residue protein sequence, read N- to C-terminus: Homeobox protein HD-7 (107 aa).

A DNA-binding region (homeobox) is located at residues 21–80; the sequence is KPGEKVRKSEFQKEVLKKVYQATPYPTWENKIDIGILISLSPRAVDIWFQNKRHINKGKN.

It localises to the nucleus. This is Homeobox protein HD-7 (HD-7) from Encephalitozoon cuniculi (strain GB-M1) (Microsporidian parasite).